The primary structure comprises 116 residues: Ribosome-binding factor A (116 aa).

Belongs to the RbfA family. Monomer. Binds 30S ribosomal subunits, but not 50S ribosomal subunits or 70S ribosomes.

It localises to the cytoplasm. In terms of biological role, one of several proteins that assist in the late maturation steps of the functional core of the 30S ribosomal subunit. Associates with free 30S ribosomal subunits (but not with 30S subunits that are part of 70S ribosomes or polysomes). Required for efficient processing of 16S rRNA. May interact with the 5'-terminal helix region of 16S rRNA. The polypeptide is Ribosome-binding factor A (Streptococcus mutans serotype c (strain ATCC 700610 / UA159)).